A 285-amino-acid polypeptide reads, in one-letter code: Eukaryotic translation initiation factor 3 subunit F-2 (285 aa).

Residues 11 to 145 (VFIKPLVLFQ…TRLYCAVEIG (135 aa)) enclose the MPN domain.

This sequence belongs to the eIF-3 subunit F family. As to quaternary structure, component of the eukaryotic translation initiation factor 3 (eIF-3) complex. The eIF-3 complex interacts with pix.

It localises to the cytoplasm. Its function is as follows. Component of the eukaryotic translation initiation factor 3 (eIF-3) complex, which is involved in protein synthesis of a specialized repertoire of mRNAs and, together with other initiation factors, stimulates binding of mRNA and methionyl-tRNAi to the 40S ribosome. The eIF-3 complex specifically targets and initiates translation of a subset of mRNAs involved in cell proliferation. This is Eukaryotic translation initiation factor 3 subunit F-2 from Drosophila yakuba (Fruit fly).